The chain runs to 2164 residues: Genome polyprotein (2164 aa).

G2 is lipidated: N-myristoyl glycine; by host. Residues 2 to 1477 (GAQVSRQNVG…DLGIANMTIG (1476 aa)) are Cytoplasmic-facing. The disordered stretch occupies residues 208–239 (NVSVGYNHTHPGEQGREVVPSRTSSDNKRPSD). The amphipathic alpha-helix stretch occupies residues 572-588 (LTQNPVENYIDSVLNEV). Residues H884 and D901 each act as for protease 2A activity in the active site. Zn(2+)-binding residues include C918 and C920. Residue C972 is the For protease 2A activity of the active site. Residues C978 and H980 each contribute to the Zn(2+) site. The interval 1104–1173 (SDSWLKKFTE…TIRLAPASVQ (70 aa)) is membrane-binding. The oligomerization stretch occupies residues 1104 to 1237 (SDSWLKKFTE…SPGTGKSLAT (134 aa)). The segment at 1125-1129 (GQKIS) is RNA-binding. Residues 1197–1357 (EARRIKNLYI…KEYLLDGKLD (161 aa)) enclose the SF3 helicase domain. 1227 to 1234 (GSPGTGKS) is a binding site for ATP. 3 residues coordinate Zn(2+): C1365, C1376, and C1381. Residues 1365–1381 (CDVNIKIGNAKCCPFIC) form a C4-type; degenerate zinc finger. Residues 1408 to 1415 (EDRRRSSA) are RNA-binding. An oligomerization region spans residues 1419–1424 (MEAIFQ). An intramembrane segment occupies 1478 to 1493 (IIANVVSIVGVIYIIY). Residues 1494–2164 (KLFCTLQGPY…VLEHEWYEKF (671 aa)) lie on the Cytoplasmic side of the membrane. Y1503 carries the O-(5'-phospho-RNA)-tyrosine modification. A Peptidase C3 domain is found at 1522 to 1700 (GPEEEFGRSL…FSAMLLKSYF (179 aa)). Catalysis depends on for protease 3C activity residues H1561, E1592, and C1668. The 114-residue stretch at 1932–2045 (ECLMAFDYSN…SYNFKLDMAV (114 aa)) folds into the RdRp catalytic domain. Residues D1938 and D2031 each contribute to the Mg(2+) site.

Belongs to the picornaviruses polyprotein family. As to quaternary structure, interacts with capsid protein VP1 and capsid protein VP3 to form heterotrimeric protomers. In terms of assembly, interacts with capsid protein VP0, and capsid protein VP3 to form heterotrimeric protomers. Five protomers subsequently associate to form pentamers which serve as building blocks for the capsid. Interacts with capsid protein VP2, capsid protein VP3 and capsid protein VP4 following cleavage of capsid protein VP0. Interacts with capsid protein VP1 and capsid protein VP3 in the mature capsid. As to quaternary structure, interacts with capsid protein VP0 and capsid protein VP1 to form heterotrimeric protomers. Five protomers subsequently associate to form pentamers which serve as building blocks for the capsid. Interacts with capsid protein VP4 in the mature capsid. Interacts with protein 2C; this interaction may be important for virion morphogenesis. In terms of assembly, interacts with capsid protein VP1 and capsid protein VP3. Homodimer. As to quaternary structure, homohexamer; forms a hexameric ring structure with 6-fold symmetry characteristic of AAA+ ATPases. Interacts (via N-terminus) with host RTN3 (via reticulon domain); this interaction is important for viral replication. Interacts with capsid protein VP3; this interaction may be important for virion morphogenesis. In terms of assembly, interacts with protein 3CD. Homodimer. Interacts with host GBF1. Interacts (via GOLD domain) with host ACBD3 (via GOLD domain); this interaction allows the formation of a viral protein 3A/ACBD3 heterotetramer with a 2:2 stoichiometry, which will stimulate the recruitment of host PI4KB in order to synthesize PI4P at the viral RNA replication sites. As to quaternary structure, interacts with RNA-directed RNA polymerase. In terms of assembly, interacts with protein 3AB and with RNA-directed RNA polymerase. Interacts with Viral protein genome-linked and with protein 3CD. Mg(2+) is required as a cofactor. Post-translationally, specific enzymatic cleavages in vivo by the viral proteases yield processing intermediates and the mature proteins. Myristoylation is required for the formation of pentamers during virus assembly. Further assembly of 12 pentamers and a molecule of genomic RNA generates the provirion. In terms of processing, during virion maturation, immature virions are rendered infectious following cleavage of VP0 into VP4 and VP2. This maturation seems to be an autocatalytic event triggered by the presence of RNA in the capsid and it is followed by a conformational change infectious virion. Post-translationally, myristoylation is required during RNA encapsidation and formation of the mature virus particle. VPg is uridylylated by the polymerase into VPg-pUpU. This acts as a nucleotide-peptide primer for the genomic RNA replication.

Its subcellular location is the virion. The protein localises to the host cytoplasm. It is found in the host cytoplasmic vesicle membrane. The protein resides in the host nucleus. It carries out the reaction a ribonucleoside 5'-triphosphate + H2O = a ribonucleoside 5'-diphosphate + phosphate + H(+). The enzyme catalyses Selective cleavage of Tyr-|-Gly bond in the picornavirus polyprotein.. It catalyses the reaction RNA(n) + a ribonucleoside 5'-triphosphate = RNA(n+1) + diphosphate. The catalysed reaction is Selective cleavage of Gln-|-Gly bond in the poliovirus polyprotein. In other picornavirus reactions Glu may be substituted for Gln, and Ser or Thr for Gly.. Replication or transcription is subject to high level of random mutations by the nucleotide analog ribavirin. In terms of biological role, forms an icosahedral capsid of pseudo T=3 symmetry with capsid proteins VP2 and VP3. The capsid is 300 Angstroms in diameter, composed of 60 copies of each capsid protein and enclosing the viral positive strand RNA genome. Capsid protein VP1 mainly forms the vertices of the capsid. Capsid protein VP1 interacts with host cell receptor to provide virion attachment to target host cells. This attachment induces virion internalization. Tyrosine kinases are probably involved in the entry process. After binding to its receptor, the capsid undergoes conformational changes. Capsid protein VP1 N-terminus (that contains an amphipathic alpha-helix) and capsid protein VP4 are externalized. Together, they shape a pore in the host membrane through which viral genome is translocated to host cell cytoplasm. Functionally, forms an icosahedral capsid of pseudo T=3 symmetry with capsid proteins VP2 and VP3. The capsid is 300 Angstroms in diameter, composed of 60 copies of each capsid protein and enclosing the viral positive strand RNA genome. Its function is as follows. Lies on the inner surface of the capsid shell. After binding to the host receptor, the capsid undergoes conformational changes. Capsid protein VP4 is released, Capsid protein VP1 N-terminus is externalized, and together, they shape a pore in the host membrane through which the viral genome is translocated into the host cell cytoplasm. Component of immature procapsids, which is cleaved into capsid proteins VP4 and VP2 after maturation. Allows the capsid to remain inactive before the maturation step. In terms of biological role, cysteine protease that cleaves viral polyprotein and specific host proteins. It is responsible for the autocatalytic cleavage between the P1 and P2 regions, which is the first cleavage occurring in the polyprotein. Also cleaves the host translation initiation factor EIF4G1, in order to shut down the capped cellular mRNA translation. Inhibits the host nucleus-cytoplasm protein and RNA trafficking by cleaving host members of the nuclear pores. Counteracts stress granule formation probably by antagonizing its assembly or promoting its dissassembly. Functionally, plays an essential role in the virus replication cycle by acting as a viroporin. Creates a pore in the host endoplasmic reticulum and as a consequence releases Ca2+ in the cytoplasm of infected cell. In turn, high levels of cytoplasmic calcium may trigger membrane trafficking and transport of viral ER-associated proteins to viroplasms, sites of viral genome replication. Its function is as follows. Induces and associates with structural rearrangements of intracellular membranes. Displays RNA-binding, nucleotide binding and NTPase activities. May play a role in virion morphogenesis and viral RNA encapsidation by interacting with the capsid protein VP3. Localizes the viral replication complex to the surface of membranous vesicles. Together with protein 3CD binds the Cis-Active RNA Element (CRE) which is involved in RNA synthesis initiation. Acts as a cofactor to stimulate the activity of 3D polymerase, maybe through a nucleid acid chaperone activity. In terms of biological role, localizes the viral replication complex to the surface of membranous vesicles. It inhibits host cell endoplasmic reticulum-to-Golgi apparatus transport and causes the disassembly of the Golgi complex, possibly through GBF1 interaction. This would result in depletion of MHC, trail receptors and IFN receptors at the host cell surface. Plays an essential role in viral RNA replication by recruiting ACBD3 and PI4KB at the viral replication sites, thereby allowing the formation of the rearranged membranous structures where viral replication takes place. Functionally, acts as a primer for viral RNA replication and remains covalently bound to viral genomic RNA. VPg is uridylylated prior to priming replication into VPg-pUpU. The oriI viral genomic sequence may act as a template for this. The VPg-pUpU is then used as primer on the genomic RNA poly(A) by the RNA-dependent RNA polymerase to replicate the viral genome. During genome replication, the VPg-RNA linkage is removed by the host TDP2, thereby accelerating replication. During the late stage of the replication cycle, host TDP2 is excluded from sites of viral RNA synthesis and encapsidation, allowing for the generation of progeny virions. Its function is as follows. Involved in the viral replication complex and viral polypeptide maturation. It exhibits protease activity with a specificity and catalytic efficiency that is different from protease 3C. Protein 3CD lacks polymerase activity. Protein 3CD binds to the 5'UTR of the viral genome. Replicates the viral genomic RNA on the surface of intracellular membranes. May form linear arrays of subunits that propagate along a strong head-to-tail interaction called interface-I. Covalently attaches UMP to a tyrosine of VPg, which is used to prime RNA synthesis. The positive stranded RNA genome is first replicated at virus induced membranous vesicles, creating a dsRNA genomic replication form. This dsRNA is then used as template to synthesize positive stranded RNA genomes. ss(+)RNA genomes are either translated, replicated or encapsidated. In terms of biological role, major viral protease that mediates proteolytic processing of the polyprotein. Cleaves host EIF5B, contributing to host translation shutoff. Also cleaves host PABPC1, contributing to host translation shutoff. Cleaves host NLRP1, triggers host N-glycine-mediated degradation of the autoinhibitory NLRP1 N-terminal fragment. This is Genome polyprotein from Human rhinovirus A serotype 89 (strain 41467-Gallo) (HRV-89).